Here is a 174-residue protein sequence, read N- to C-terminus: NADH-ubiquinone oxidoreductase chain 6 (174 aa).

5 helical membrane passes run 1 to 21 (MTYVLFLLSVGLVMGFVGFSS), 24 to 44 (SPIYGGLVLIVSGVVGCAIIL), 47 to 67 (GGGYMGLMVFLIYLGGMMVVF), 86 to 106 (VEVLVSVLVGLAMEVGLVLWV), and 151 to 171 (WLVVVTGWTLFVGVYIVIEIA).

Belongs to the complex I subunit 6 family. As to quaternary structure, core subunit of respiratory chain NADH dehydrogenase (Complex I) which is composed of 45 different subunits.

It localises to the mitochondrion inner membrane. The catalysed reaction is a ubiquinone + NADH + 5 H(+)(in) = a ubiquinol + NAD(+) + 4 H(+)(out). Functionally, core subunit of the mitochondrial membrane respiratory chain NADH dehydrogenase (Complex I) which catalyzes electron transfer from NADH through the respiratory chain, using ubiquinone as an electron acceptor. Essential for the catalytic activity and assembly of complex I. This Gorilla gorilla gorilla (Western lowland gorilla) protein is NADH-ubiquinone oxidoreductase chain 6 (MT-ND6).